The following is a 312-amino-acid chain: Ornithine carbamoyltransferase (312 aa).

Carbamoyl phosphate contacts are provided by residues 60-63, Gln87, Arg111, and 138-141; these read STRT and HPCQ. L-ornithine is bound by residues Asn169, Asp229, and 233–234; that span reads SM. Carbamoyl phosphate contacts are provided by residues 268–269 and Arg296; that span reads CL.

It belongs to the aspartate/ornithine carbamoyltransferase superfamily. OTCase family.

Its subcellular location is the cytoplasm. It catalyses the reaction carbamoyl phosphate + L-ornithine = L-citrulline + phosphate + H(+). Its pathway is amino-acid biosynthesis; L-arginine biosynthesis; L-arginine from L-ornithine and carbamoyl phosphate: step 1/3. Reversibly catalyzes the transfer of the carbamoyl group from carbamoyl phosphate (CP) to the N(epsilon) atom of ornithine (ORN) to produce L-citrulline. In Rhodopseudomonas palustris (strain BisA53), this protein is Ornithine carbamoyltransferase.